The primary structure comprises 413 residues: Serine--tRNA ligase (413 aa).

221 to 223 lines the L-serine pocket; that stretch reads TAE. 252–254 is an ATP binding site; it reads RRE. Glutamate 275 is an L-serine binding site. Residue 339–342 participates in ATP binding; that stretch reads EVSS. Serine 375 contributes to the L-serine binding site.

Belongs to the class-II aminoacyl-tRNA synthetase family. Type-1 seryl-tRNA synthetase subfamily. In terms of assembly, homodimer. The tRNA molecule binds across the dimer.

It is found in the cytoplasm. It carries out the reaction tRNA(Ser) + L-serine + ATP = L-seryl-tRNA(Ser) + AMP + diphosphate + H(+). It catalyses the reaction tRNA(Sec) + L-serine + ATP = L-seryl-tRNA(Sec) + AMP + diphosphate + H(+). It participates in aminoacyl-tRNA biosynthesis; selenocysteinyl-tRNA(Sec) biosynthesis; L-seryl-tRNA(Sec) from L-serine and tRNA(Sec): step 1/1. In terms of biological role, catalyzes the attachment of serine to tRNA(Ser). Is also able to aminoacylate tRNA(Sec) with serine, to form the misacylated tRNA L-seryl-tRNA(Sec), which will be further converted into selenocysteinyl-tRNA(Sec). The polypeptide is Serine--tRNA ligase (Dehalococcoides mccartyi (strain ATCC BAA-2266 / KCTC 15142 / 195) (Dehalococcoides ethenogenes (strain 195))).